The primary structure comprises 919 residues: TRPM8 channel-associated factor 2 (919 aa).

In terms of domain architecture, Peptidase M60 spans 543–842; that stretch reads DVWMSTGLYL…TYLQLQEVFG (300 aa).

The protein belongs to the TCAF family. As to quaternary structure, interacts with TRPM8 (via N-terminus and C-terminus domains); the interaction inhibits TRPM8 channel activity. Interacts with TRPV6.

It localises to the cell membrane. Negatively regulates the plasma membrane cation channel TRPM8 activity. Involved in the recruitment of TRPM8 to the cell surface. Promotes prostate cancer cell migration stimulation in a TRPM8-dependent manner. This chain is TRPM8 channel-associated factor 2, found in Mus musculus (Mouse).